We begin with the raw amino-acid sequence, 282 residues long: 2-dehydro-3-deoxyphosphooctonate aldolase (282 aa).

Belongs to the KdsA family.

It localises to the cytoplasm. It catalyses the reaction D-arabinose 5-phosphate + phosphoenolpyruvate + H2O = 3-deoxy-alpha-D-manno-2-octulosonate-8-phosphate + phosphate. It participates in carbohydrate biosynthesis; 3-deoxy-D-manno-octulosonate biosynthesis; 3-deoxy-D-manno-octulosonate from D-ribulose 5-phosphate: step 2/3. Its pathway is bacterial outer membrane biogenesis; lipopolysaccharide biosynthesis. This is 2-dehydro-3-deoxyphosphooctonate aldolase from Shewanella woodyi (strain ATCC 51908 / MS32).